A 359-amino-acid polypeptide reads, in one-letter code: Alanine racemase, biosynthetic (359 aa).

K34 acts as the Proton acceptor; specific for D-alanine in catalysis. K34 bears the N6-(pyridoxal phosphate)lysine mark. R129 lines the substrate pocket. Y255 functions as the Proton acceptor; specific for L-alanine in the catalytic mechanism. M303 contributes to the substrate binding site.

The protein belongs to the alanine racemase family. Pyridoxal 5'-phosphate is required as a cofactor.

It carries out the reaction L-alanine = D-alanine. It functions in the pathway amino-acid biosynthesis; D-alanine biosynthesis; D-alanine from L-alanine: step 1/1. It participates in cell wall biogenesis; peptidoglycan biosynthesis. In terms of biological role, catalyzes the interconversion of L-alanine and D-alanine. Provides the D-alanine required for cell wall biosynthesis. The sequence is that of Alanine racemase, biosynthetic (alr) from Escherichia coli O157:H7.